We begin with the raw amino-acid sequence, 312 residues long: G-protein coupled receptor BILF1 (312 aa).

Over methionine 1–threonine 40 the chain is Extracellular. 2 disulfide bridges follow: cysteine 28–cysteine 258 and cysteine 97–cysteine 174. A helical transmembrane segment spans residues serine 41 to valine 61. Topologically, residues arginine 62 to arginine 67 are cytoplasmic. Residues methionine 68–isoleucine 88 form a helical membrane-spanning segment. The Extracellular portion of the chain corresponds to glutamine 89–glycine 95. Residues leucine 96–leucine 116 form a helical membrane-spanning segment. The Cytoplasmic segment spans residues glycine 117–asparagine 138. A helical membrane pass occupies residues valine 139–isoleucine 159. At threonine 160–glycine 192 the chain is on the extracellular side. A helical membrane pass occupies residues cysteine 193–leucine 213. The Cytoplasmic segment spans residues arginine 214–threonine 228. A helical transmembrane segment spans residues phenylalanine 229–glycine 249. The Extracellular segment spans residues glutamate 250 to glycine 269. A helical membrane pass occupies residues proline 270–methionine 290. Over aspartate 291–threonine 312 the chain is Cytoplasmic.

This sequence belongs to the Epstein-Barr virus BILF1 protein family. Interacts with host CXCR4 to form higher-order heterooligomers. Interacts with host Gi heterotrimer.

The protein resides in the host cell membrane. The protein localises to the host mitochondrion outer membrane. In terms of biological role, constitutively active, ligand-independent G protein-coupled receptor that has immunoevasive and oncogenic activities. Couples with the host inhibitory G protein (Gi) in order to disrupt the host chemokine signaling. As a consequence of its constitutive activity, mediates host CXCR4 inhibition. Enhances degradation of host major histocompatibility complex class I antigens via lysosomes, thereby modulating the antigen presentation to cytotoxic T cells. Targets selectively HLA-A, HLA-Band HLA-E molecules. Targets also newly synthesized MHC-I/peptide complexes en route to the host cell surface. Inhibits the host EIF2AK2/PKR phosphorylation. Displays tranforming activity. Utilizes its C-terminal tail to trigger host MAVS UFMylation via PARK2, resulting in selective MAVS removal from mitochondrial membranes and routing to lysosomes to prevent viral activation of the NLRP3 inflammasome. This chain is G-protein coupled receptor BILF1, found in Homo sapiens (Human).